Reading from the N-terminus, the 200-residue chain is Rho-related protein racD (200 aa).

Positions 20, 22, 23, 24, 25, 39, and 42 each coordinate GTP. A Mg(2+)-binding site is contributed by Thr-24. 2 consecutive short sequence motifs (switch) follow at residues 33 to 44 and 64 to 82; these read NEFPKDYVPTVF and DTAGQEDYEQLRPLSYPNT. A Mg(2+)-binding site is contributed by Thr-42. Positions 123, 125, and 166 each coordinate GTP. Cys-197 carries the cysteine methyl ester modification. Cys-197 is lipidated: S-geranylgeranyl cysteine. Positions 198–200 are cleaved as a propeptide — removed in mature form; it reads ALL.

It belongs to the small GTPase superfamily. Rho family. Mg(2+) serves as cofactor.

Its subcellular location is the cell membrane. The protein localises to the cytoplasm. It is found in the cytoskeleton. The catalysed reaction is GTP + H2O = GDP + phosphate + H(+). Regulated by guanine nucleotide exchange factors (GEFs) which promote the exchange of bound GDP for free GTP, GTPase activating proteins (GAPs) which increase the GTP hydrolysis activity, and GDP dissociation inhibitors which inhibit the dissociation of the nucleotide from the GTPase. Functionally, small GTPase which cycles between active GTP-bound and inactive GDP-bound states. This is Rho-related protein racD from Entamoeba histolytica (strain ATCC 30459 / HM-1:IMSS / ABRM).